Consider the following 143-residue polypeptide: Crossover junction endodeoxyribonuclease Hjc (143 aa).

Residue Glu-11 participates in Mg(2+) binding. The active site involves Ser-31. The Mg(2+) site is built by Asp-41 and Glu-54.

This sequence belongs to the Holliday junction resolvase Hjc family. In terms of assembly, homodimer. It depends on Mg(2+) as a cofactor.

The catalysed reaction is Endonucleolytic cleavage at a junction such as a reciprocal single-stranded crossover between two homologous DNA duplexes (Holliday junction).. Its function is as follows. A structure-specific endonuclease that resolves Holliday junction (HJ) intermediates during genetic recombination. Cleaves 4-way DNA junctions introducing paired nicks in opposing strands, leaving a 5'-terminal phosphate and a 3'-terminal hydroxyl group that are ligated to produce recombinant products. Redundant function with Holliday junction resolvase Hje. This chain is Crossover junction endodeoxyribonuclease Hjc, found in Sulfolobus acidocaldarius (strain ATCC 33909 / DSM 639 / JCM 8929 / NBRC 15157 / NCIMB 11770).